A 141-amino-acid polypeptide reads, in one-letter code: Molybdopterin synthase catalytic subunit 2 (141 aa).

Residues 37–39 (MIR), 103–104 (HR), Lys119, and 126–128 (KHQ) contribute to the substrate site.

The protein belongs to the MoaE family. In terms of assembly, heterotetramer of 2 MoaD subunits and 2 MoaE subunits. Also stable as homodimer. The enzyme changes between these two forms during catalysis.

It catalyses the reaction 2 [molybdopterin-synthase sulfur-carrier protein]-C-terminal-Gly-aminoethanethioate + cyclic pyranopterin phosphate + H2O = molybdopterin + 2 [molybdopterin-synthase sulfur-carrier protein]-C-terminal Gly-Gly + 2 H(+). Its pathway is cofactor biosynthesis; molybdopterin biosynthesis. Converts molybdopterin precursor Z into molybdopterin. This requires the incorporation of two sulfur atoms into precursor Z to generate a dithiolene group. The sulfur is provided by MoaD. This is Molybdopterin synthase catalytic subunit 2 (moaE2) from Mycobacterium tuberculosis (strain CDC 1551 / Oshkosh).